A 345-amino-acid chain; its full sequence is Nicotinate-nucleotide--dimethylbenzimidazole phosphoribosyltransferase (345 aa).

E312 functions as the Proton acceptor in the catalytic mechanism.

Belongs to the CobT family.

It catalyses the reaction 5,6-dimethylbenzimidazole + nicotinate beta-D-ribonucleotide = alpha-ribazole 5'-phosphate + nicotinate + H(+). The protein operates within nucleoside biosynthesis; alpha-ribazole biosynthesis; alpha-ribazole from 5,6-dimethylbenzimidazole: step 1/2. Its function is as follows. Catalyzes the synthesis of alpha-ribazole-5'-phosphate from nicotinate mononucleotide (NAMN) and 5,6-dimethylbenzimidazole (DMB). The protein is Nicotinate-nucleotide--dimethylbenzimidazole phosphoribosyltransferase of Bacteroides fragilis (strain ATCC 25285 / DSM 2151 / CCUG 4856 / JCM 11019 / LMG 10263 / NCTC 9343 / Onslow / VPI 2553 / EN-2).